We begin with the raw amino-acid sequence, 84 residues long: Metallothionein-like protein 2C (84 aa).

It belongs to the metallothionein superfamily. Type 15 family.

The protein resides in the cytoplasm. It localises to the cytosol. Its function is as follows. Metallothioneins have a high content of cysteine residues that bind various heavy metals. Acts as a reactive oxygen species (ROS) scavenger in the cytosol. Possesses superoxide anion and hydroxyl radical scavenging activities in vitro. Plays a role during root development, lateral root initiation and seed embryo germination, possibly by regulating levels of cytokinin. The chain is Metallothionein-like protein 2C (MT2C) from Oryza sativa subsp. indica (Rice).